The sequence spans 295 residues: MTQPFQRVLLVSKYHDPSVLPGLRQLRDFLLARDMPTFLESQSAADIGDSLGLPLLSFAEADAGSDLVIALGGDGTLLGTARQTAQSGIPILGINQGRLGFLADLSIHQISEALPPILEGHYQQDLRSILHAELWRSEERVHTGLAVNEVFIHKGGGESMIELQVQMDGRFVYTQRADGLIIATPTGSTAYAMSAGGPILTPTLAALLLVLICPHTLTARPLAVADSVEIVARLTASRQSAALSLDSHCSVPLEIGDEIVIRRASCAARFIHPEEENFFQILRGKLHWADSPGTD.

Asp74 functions as the Proton acceptor in the catalytic mechanism. Residues 74–75, 148–149, Arg176, Asp178, and 189–194 contribute to the NAD(+) site; these read DG, NE, and TAYAMS.

This sequence belongs to the NAD kinase family. Requires a divalent metal cation as cofactor.

The protein resides in the cytoplasm. The catalysed reaction is NAD(+) + ATP = ADP + NADP(+) + H(+). Functionally, involved in the regulation of the intracellular balance of NAD and NADP, and is a key enzyme in the biosynthesis of NADP. Catalyzes specifically the phosphorylation on 2'-hydroxyl of the adenosine moiety of NAD to yield NADP. This chain is NAD kinase, found in Acidithiobacillus ferrooxidans (strain ATCC 23270 / DSM 14882 / CIP 104768 / NCIMB 8455) (Ferrobacillus ferrooxidans (strain ATCC 23270)).